Consider the following 400-residue polypeptide: Acetate kinase (400 aa).

Mg(2+) is bound at residue N10. K17 contacts ATP. R91 contacts substrate. D150 functions as the Proton donor/acceptor in the catalytic mechanism. ATP contacts are provided by residues 210–214 (HLGNG), 285–287 (DCR), and 333–337 (GIGEN). Residue E387 participates in Mg(2+) binding.

This sequence belongs to the acetokinase family. As to quaternary structure, homodimer. The cofactor is Mg(2+). Requires Mn(2+) as cofactor.

Its subcellular location is the cytoplasm. The enzyme catalyses acetate + ATP = acetyl phosphate + ADP. It functions in the pathway metabolic intermediate biosynthesis; acetyl-CoA biosynthesis; acetyl-CoA from acetate: step 1/2. Functionally, catalyzes the formation of acetyl phosphate from acetate and ATP. Can also catalyze the reverse reaction. The sequence is that of Acetate kinase from Proteus mirabilis (strain HI4320).